Consider the following 364-residue polypeptide: Homeobox protein KNOX3 (364 aa).

Residues 13–49 (TAHGQHHSQLPWGSSPLSAVISPPPQQQQQHQQQSAG) form a disordered region. Residues 19–29 (HSQLPWGSSPL) are compositionally biased toward polar residues. Residues 246–266 (ELKHHLLKKYSGYLSSLKQEL) form the ELK domain. Positions 267–330 (SKKKKKGKLP…NQRKRHWKPT (64 aa)) form a DNA-binding region, homeobox; TALE-type.

It belongs to the TALE/KNOX homeobox family. As to quaternary structure, binds DNA as a monomer. In terms of tissue distribution, the unit of inflorescence is the spikelet, which bears a fertile tract, the lemma, and the floret consisting of palea, two lodicules, three stamens and the pistil. The lemma is completed by the awn, an appendage homologous to the laminae of normal leaves. Expressed in the inflorescences and lemmas and at lower levels, in palea and vascular bundles.

Its subcellular location is the nucleus. In terms of biological role, may play a role in meristem formation and/or maintenance. Overexpression causes the hooded phenotype characterized by the appearance of an extra flower of inverse polarity on the lemma. Binds to the DNA sequence 5'-TGAC-3'. This chain is Homeobox protein KNOX3 (KNOX3), found in Hordeum vulgare (Barley).